We begin with the raw amino-acid sequence, 176 residues long: Cathelicidin-2 (176 aa).

Positions 1 to 29 (METQRASLSLGRCSLWLLLLGLVLPSASA) are cleaved as a signal peptide. Position 30 is a pyrrolidone carboxylic acid (glutamine 30). Residues 30–130 (QALSYREAVL…DINCNELQSV (101 aa)) constitute a propeptide that is removed on maturation. Cystine bridges form between cysteine 85–cysteine 96 and cysteine 107–cysteine 124. The interval 157–176 (IFPPIRPPFRPPLGPFPGRR) is disordered. The residue at position 173 (proline 173) is a Proline amide. The propeptide at 174 to 176 (GRR) is removed in mature form.

This sequence belongs to the cathelicidin family. Post-translationally, elastase is responsible for its maturation. In terms of tissue distribution, large granules of neutrophils.

It localises to the secreted. In terms of biological role, exerts, in vitro, a potent antimicrobial activity. Probably due to an impairment of the function of the respiratory chain and of energy-dependent activities in the inner membrane of susceptible microorganisms. The polypeptide is Cathelicidin-2 (CATHL2) (Bos taurus (Bovine)).